A 784-amino-acid polypeptide reads, in one-letter code: Spindle pole body component alp4 (784 aa).

The protein belongs to the TUBGCP family. As to quaternary structure, part of the gamma-tubulin complex. Interacts with mcp6. Interacts with mto1. Interacts with mto2.

It localises to the cytoplasm. The protein localises to the cytoskeleton. It is found in the microtubule organizing center. Its subcellular location is the spindle pole body. Functionally, component of the gamma tubule complex that is required for the regulation of both interphase microtubules and mitotic bipolar spindles. This Schizosaccharomyces pombe (strain 972 / ATCC 24843) (Fission yeast) protein is Spindle pole body component alp4 (alp4).